A 762-amino-acid polypeptide reads, in one-letter code: ABC-type oligopeptide transporter ABCB9 (762 aa).

The next 8 helical transmembrane spans lie at 7–27 (VVVTLAFVSTDVGVTTAIYAF), 47–67 (VLDLWAACLYRSCLLLGATIG), 84–104 (LVITLVCLFVGIYAMAKLLLF), 116–136 (FWALFVWTYISLAASFLLWGL), 181–201 (VAFLVAASFFLIVAALGETFL), 221–241 (FTTAVVVVCLLAIGSSLAAGI), 315–335 (VFMFSLSWQLSLVTFMGFPII), and 412–432 (SGLTLLVVQVSILYYGGHLVI). One can recognise an ABC transmembrane type-1 domain in the interval 184-467 (LVAASFFLIV…VGSVYSGLMQ (284 aa)). One can recognise an ABC transporter domain in the interval 500-736 (VDFENVTFTY…GGLYAKLVQR (237 aa)). Position 535–542 (535–542 (GPSGSGKS)) interacts with ATP.

The protein belongs to the ABC transporter superfamily. ABCB family. MHC peptide exporter (TC 3.A.1.209) subfamily. Homodimer. Interacts (via TMD0 region) with LAMP1; this interaction strongly stabilizes ABCB9 and protects ABCB9 against lysosomal degradation. Interacts (via TMD0 region) with LAMP2 (isoform LAMP-2B). Interacts (via TMD0) with YIF1B; this interaction allows (but is not essential) the ER-to-Golgi trafficking and strongly depends on a salt bridge within TMD0. As to expression, highly expressed in testis, particularly in the Sertoli cells of the seminiferous tubules, and at moderate levels in brain and spinal cord.

Its subcellular location is the lysosome membrane. The catalysed reaction is a [oligopeptide](in) + ATP + H2O = a [oligopeptide](out) + ADP + phosphate + H(+). In terms of biological role, ATP-dependent low-affinity peptide transporter which translocates a broad spectrum of peptides from the cytosol to the lysosomal lumen for degradation. Displays a broad peptide length specificity from 6-mer up to at least 59-mer peptides with an optimum of 23-mers. Binds and transports smaller and larger peptides with the same affinity. Favors positively charged, aromatic or hydrophobic residues in the N- and C-terminal positions whereas negatively charged residues as well as asparagine and methionine are not favored. The protein is ABC-type oligopeptide transporter ABCB9 of Mus musculus (Mouse).